The sequence spans 853 residues: DNA topoisomerase 1 (853 aa).

The region spanning 3–136 is the Toprim domain; it reads KSLVIVESPV…KFRRVVFNEI (134 aa). Residues E9 and D105 each coordinate Mg(2+). One can recognise a Topo IA-type catalytic domain in the interval 152–565; that stretch reads NMNRVYSQQA…SFFDNFSQQL (414 aa). Residues 186–191 form an interaction with DNA region; that stretch reads SAGRVQ. The active-site O-(5'-phospho-DNA)-tyrosine intermediate is the Y313. 3 C4-type zinc fingers span residues 589 to 621, 649 to 676, and 699 to 724; these read CSLC…EKRC, CKKC…NPSC, and CEKC…NDTC.

Belongs to the type IA topoisomerase family. In terms of assembly, monomer. Requires Mg(2+) as cofactor.

The enzyme catalyses ATP-independent breakage of single-stranded DNA, followed by passage and rejoining.. Its function is as follows. Releases the supercoiling and torsional tension of DNA, which is introduced during the DNA replication and transcription, by transiently cleaving and rejoining one strand of the DNA duplex. Introduces a single-strand break via transesterification at a target site in duplex DNA. The scissile phosphodiester is attacked by the catalytic tyrosine of the enzyme, resulting in the formation of a DNA-(5'-phosphotyrosyl)-enzyme intermediate and the expulsion of a 3'-OH DNA strand. The free DNA strand then undergoes passage around the unbroken strand, thus removing DNA supercoils. Finally, in the religation step, the DNA 3'-OH attacks the covalent intermediate to expel the active-site tyrosine and restore the DNA phosphodiester backbone. This Buchnera aphidicola subsp. Schizaphis graminum (strain Sg) protein is DNA topoisomerase 1.